We begin with the raw amino-acid sequence, 439 residues long: GTPase Der (439 aa).

EngA-type G domains are found at residues 4–166 (PIVA…PAQD) and 175–350 (IRIA…EEAS). Residues 10–17 (GRPNVGKS), 57–61 (DTGGL), 119–122 (NKVE), 181–188 (GRPNVGKS), 228–232 (DTAGM), and 293–296 (NKWD) contribute to the GTP site. Positions 351–435 (KRVATADLNN…PIRFFLRKRE (85 aa)) constitute a KH-like domain.

The protein belongs to the TRAFAC class TrmE-Era-EngA-EngB-Septin-like GTPase superfamily. EngA (Der) GTPase family. Associates with the 50S ribosomal subunit.

In terms of biological role, GTPase that plays an essential role in the late steps of ribosome biogenesis. The polypeptide is GTPase Der (Desulforamulus reducens (strain ATCC BAA-1160 / DSM 100696 / MI-1) (Desulfotomaculum reducens)).